The chain runs to 474 residues: tRNA-2-methylthio-N(6)-dimethylallyladenosine synthase (474 aa).

The MTTase N-terminal domain maps to glutamate 21–serine 138. Positions 30, 67, 101, 175, 179, and 182 each coordinate [4Fe-4S] cluster. In terms of domain architecture, Radical SAM core spans arginine 161–alanine 395. The TRAM domain maps to arginine 397 to serine 460.

It belongs to the methylthiotransferase family. MiaB subfamily. As to quaternary structure, monomer. The cofactor is [4Fe-4S] cluster.

Its subcellular location is the cytoplasm. The catalysed reaction is N(6)-dimethylallyladenosine(37) in tRNA + (sulfur carrier)-SH + AH2 + 2 S-adenosyl-L-methionine = 2-methylsulfanyl-N(6)-dimethylallyladenosine(37) in tRNA + (sulfur carrier)-H + 5'-deoxyadenosine + L-methionine + A + S-adenosyl-L-homocysteine + 2 H(+). Functionally, catalyzes the methylthiolation of N6-(dimethylallyl)adenosine (i(6)A), leading to the formation of 2-methylthio-N6-(dimethylallyl)adenosine (ms(2)i(6)A) at position 37 in tRNAs that read codons beginning with uridine. In Halorhodospira halophila (strain DSM 244 / SL1) (Ectothiorhodospira halophila (strain DSM 244 / SL1)), this protein is tRNA-2-methylthio-N(6)-dimethylallyladenosine synthase.